A 390-amino-acid chain; its full sequence is Neutrophil cytosol factor 1 (390 aa).

The 122-residue stretch at 4-125 (TFIRHIALLG…DFFKVRPDDL (122 aa)) folds into the PX domain. 2 consecutive SH3 domains span residues 156-215 (IILQ…PLDS) and 226-285 (YAGE…KSGQ). The interval 285 to 390 (QDVSQAQRQI…STKRKLASAV (106 aa)) is disordered. A phosphoserine mark is found at Ser303 and Ser304. A compositionally biased stretch (basic residues) spans 309–318 (HSIHQRSRKR). Phosphoserine occurs at positions 320, 328, 345, and 348.

In terms of assembly, component of the phagocyte NADPH oxidase complex composed of an obligatory core heterodimer formed by the membrane proteins CYBA and CYBB and the cytosolic regulatory subunits NCF1/p47-phox, NCF2/p67-phox, NCF4/p40-phox and the small GTPase RAC1 or RAC2. Part of a cytosolic complex composed at least by NCF1, NCF2 and NCF4. Interacts (via C-terminus) with NCF2 (via the C-terminal SH3 domain). Interacts with NCF4. Interacts with CYBB. Interacts (via the second SH3 domain) with CYBA; interaction is phosphorylation-dependent. Interacts with NOXA1. Interacts with ADAM15. Interacts with TRAF4. Interacts with FASLG. Interacts with PARK7 (via C-terminus); the interaction is enhanced by LPS and modulates NCF1 phosphorylation and membrane translocation. Phosphorylated by PRKCD; phosphorylation induces activation of NCF1, leading to assembly and activation of the NADPH oxidase complex. Detected in peripheral blood monocytes and neutrophils (at protein level).

The protein resides in the cytoplasm. It is found in the cytosol. It localises to the membrane. Functionally, subunit of the phagocyte NADPH oxidase complex that mediates the transfer of electrons from cytosolic NADPH to O2 to produce the superoxide anion (O2(-)). In the activated complex, electrons are first transferred from NADPH to flavin adenine dinucleotide (FAD) and subsequently transferred via two heme molecules to molecular oxygen, producing superoxide through an outer-sphere reaction. Activation of the NADPH oxidase complex is initiated by the assembly of cytosolic subunits of the NADPH oxidase complex with the core NADPH oxidase complex to form a complex at the plasma membrane or phagosomal membrane. This activation process is initiated by phosphorylation dependent binding of the cytosolic NCF1/p47-phox subunit to the C-terminus of CYBA/p22-phox. The polypeptide is Neutrophil cytosol factor 1 (Homo sapiens (Human)).